The chain runs to 129 residues: Lysozyme C (129 aa).

One can recognise a C-type lysozyme domain in the interval 1–129; sequence KVFGRCELAA…VHAWIRGCRL (129 aa). 4 disulfide bridges follow: cysteine 6–cysteine 127, cysteine 30–cysteine 115, cysteine 64–cysteine 80, and cysteine 76–cysteine 94. Catalysis depends on residues glutamate 35 and aspartate 52.

The protein belongs to the glycosyl hydrolase 22 family. As to quaternary structure, monomer.

The protein localises to the secreted. The enzyme catalyses Hydrolysis of (1-&gt;4)-beta-linkages between N-acetylmuramic acid and N-acetyl-D-glucosamine residues in a peptidoglycan and between N-acetyl-D-glucosamine residues in chitodextrins.. In terms of biological role, lysozymes have primarily a bacteriolytic function; those in tissues and body fluids are associated with the monocyte-macrophage system and enhance the activity of immunoagents. The sequence is that of Lysozyme C (LYZ) from Callipepla californica (California quail).